The following is an 881-amino-acid chain: Alanine--tRNA ligase (881 aa).

4 residues coordinate Zn(2+): histidine 565, histidine 569, cysteine 672, and histidine 676.

It belongs to the class-II aminoacyl-tRNA synthetase family. Requires Zn(2+) as cofactor.

Its subcellular location is the cytoplasm. It carries out the reaction tRNA(Ala) + L-alanine + ATP = L-alanyl-tRNA(Ala) + AMP + diphosphate. Its function is as follows. Catalyzes the attachment of alanine to tRNA(Ala) in a two-step reaction: alanine is first activated by ATP to form Ala-AMP and then transferred to the acceptor end of tRNA(Ala). Also edits incorrectly charged Ser-tRNA(Ala) and Gly-tRNA(Ala) via its editing domain. In Novosphingobium aromaticivorans (strain ATCC 700278 / DSM 12444 / CCUG 56034 / CIP 105152 / NBRC 16084 / F199), this protein is Alanine--tRNA ligase.